A 741-amino-acid chain; its full sequence is Pentatricopeptide repeat-containing protein At3g58590 (741 aa).

PPR repeat units lie at residues 48–78 (PVYV…MPER), 79–113 (NKVS…GYLP), 114–146 (NQST…GLFM), 148–178 (DAFV…MPFK), 179–213 (SLET…GASL), 214–248 (TESS…GLDC), 249–279 (EISV…AGSW), 280–314 (DIVS…GFSP), 315–349 (NQGT…GCET), 350–380 (GIVL…IRDK), 381–414 (NIVC…GFRP), 415–445 (TEYT…GYED), 446–481 (NDYV…SVVP), 483–508 (NIVA…LEQP), 509–543 (DTVS…NIRP), 544–578 (DKYT…DFSC), 580–610 (DTFV…TREK), 611–645 (NLIT…GFKP), 646–680 (DRVS…GVEP), and 681–715 (EMDH…ADAP).

This sequence belongs to the PPR family. P subfamily.

The chain is Pentatricopeptide repeat-containing protein At3g58590 from Arabidopsis thaliana (Mouse-ear cress).